The following is a 327-amino-acid chain: Phospho-N-acetylmuramoyl-pentapeptide-transferase (327 aa).

10 helical membrane passes run 3-23, 51-71, 79-99, 115-135, 140-160, 172-192, 197-217, 223-243, 248-268, and 306-326; these read TAII…PAFI, TMGG…IALF, VTTI…DDFL, LFLQ…HGGG, VFGF…FWLV, IDGL…VIAL, FDLL…FGFN, IFMG…LSIA, WTLL…MLQV, and VDFL…AILY.

This sequence belongs to the glycosyltransferase 4 family. MraY subfamily. The cofactor is Mg(2+).

It is found in the cell membrane. The catalysed reaction is UDP-N-acetyl-alpha-D-muramoyl-L-alanyl-gamma-D-glutamyl-L-lysyl-D-alanyl-D-alanine + di-trans,octa-cis-undecaprenyl phosphate = Mur2Ac(oyl-L-Ala-gamma-D-Glu-L-Lys-D-Ala-D-Ala)-di-trans,octa-cis-undecaprenyl diphosphate + UMP. The protein operates within cell wall biogenesis; peptidoglycan biosynthesis. Catalyzes the initial step of the lipid cycle reactions in the biosynthesis of the cell wall peptidoglycan: transfers peptidoglycan precursor phospho-MurNAc-pentapeptide from UDP-MurNAc-pentapeptide onto the lipid carrier undecaprenyl phosphate, yielding undecaprenyl-pyrophosphoryl-MurNAc-pentapeptide, known as lipid I. The chain is Phospho-N-acetylmuramoyl-pentapeptide-transferase from Streptococcus gordonii (strain Challis / ATCC 35105 / BCRC 15272 / CH1 / DL1 / V288).